The sequence spans 369 residues: UPF0283 membrane protein RPA1583 (369 aa).

The segment at 1-61 is disordered; it reads MTERVPPRRP…APPPPPPRAR (61 aa). Positions 34–51 are enriched in low complexity; it reads AKPSAKADARPAASAAGA. A run of 3 helical transmembrane segments spans residues 90–110, 124–144, and 239–259; these read WGTVFWSAATGLVSLAFWLWI, LGTIGMVLALLAGGSLAIIIG, and VSLVTAISPKALIDVLFVAIA.

This sequence belongs to the UPF0283 family.

It is found in the cell inner membrane. The chain is UPF0283 membrane protein RPA1583 from Rhodopseudomonas palustris (strain ATCC BAA-98 / CGA009).